Reading from the N-terminus, the 274-residue chain is 2-dehydro-3-deoxyphosphooctonate aldolase (274 aa).

This sequence belongs to the KdsA family.

It localises to the cytoplasm. The catalysed reaction is D-arabinose 5-phosphate + phosphoenolpyruvate + H2O = 3-deoxy-alpha-D-manno-2-octulosonate-8-phosphate + phosphate. It functions in the pathway carbohydrate biosynthesis; 3-deoxy-D-manno-octulosonate biosynthesis; 3-deoxy-D-manno-octulosonate from D-ribulose 5-phosphate: step 2/3. Its pathway is bacterial outer membrane biogenesis; lipopolysaccharide biosynthesis. This chain is 2-dehydro-3-deoxyphosphooctonate aldolase, found in Rickettsia felis (strain ATCC VR-1525 / URRWXCal2) (Rickettsia azadi).